A 194-amino-acid polypeptide reads, in one-letter code: ATP-dependent Clp protease proteolytic subunit (194 aa).

The active-site Nucleophile is the Ser98. The active site involves His123.

It belongs to the peptidase S14 family. Fourteen ClpP subunits assemble into 2 heptameric rings which stack back to back to give a disk-like structure with a central cavity, resembling the structure of eukaryotic proteasomes.

It is found in the cytoplasm. It carries out the reaction Hydrolysis of proteins to small peptides in the presence of ATP and magnesium. alpha-casein is the usual test substrate. In the absence of ATP, only oligopeptides shorter than five residues are hydrolyzed (such as succinyl-Leu-Tyr-|-NHMec, and Leu-Tyr-Leu-|-Tyr-Trp, in which cleavage of the -Tyr-|-Leu- and -Tyr-|-Trp bonds also occurs).. Its function is as follows. Cleaves peptides in various proteins in a process that requires ATP hydrolysis. Has a chymotrypsin-like activity. Plays a major role in the degradation of misfolded proteins. This chain is ATP-dependent Clp protease proteolytic subunit, found in Wigglesworthia glossinidia brevipalpis.